We begin with the raw amino-acid sequence, 1101 residues long: Nuclear pore complex protein NUP107 (1101 aa).

The protein belongs to the nucleoporin Nup84/Nup107 family. In terms of assembly, part of the nuclear pore complex (NPC). The NPC has an eight-fold symmetrical structure comprising a central transport channel and two rings, the cytoplasmic and nuclear rings, to which eight filaments are attached. The cytoplasmic filaments have loose ends, while the nuclear filaments are joined in a distal ring, forming a nuclear basket. NPCs are highly dynamic in configuration and composition, and can be devided in 3 subcomplexes, the NUP62 subcomplex, the NUP107-160 subcomplex and the NUP93 subcomplex, containing approximately 30 different nucleoporin proteins.

It is found in the nucleus envelope. The protein localises to the nucleus. The protein resides in the nuclear pore complex. The chain is Nuclear pore complex protein NUP107 from Arabidopsis thaliana (Mouse-ear cress).